Consider the following 136-residue polypeptide: Histone H3.2 (136 aa).

The tract at residues Met-1–Arg-43 is disordered. 2 positions are modified to N6,N6,N6-trimethyllysine; alternate: Lys-5 and Lys-10. Residues Lys-5 and Lys-10 each carry the N6,N6-dimethyllysine; alternate modification. Residues Lys-5 and Lys-10 each carry the N6-methyllysine; alternate modification. Lys-10 is subject to N6-acetyllysine; alternate. A Phosphoserine modification is found at Ser-11. Thr-12 carries the post-translational modification Phosphothreonine. Lys-15 is modified (N6-acetyllysine). An N6-methyllysine; alternate mark is found at Lys-19, Lys-24, and Lys-28. N6-acetyllysine; alternate occurs at positions 19 and 24. The residue at position 28 (Lys-28) is an N6,N6,N6-trimethyllysine; alternate. An N6,N6-dimethyllysine; alternate modification is found at Lys-28. The residue at position 29 (Ser-29) is a Phosphoserine. Lys-37 is modified (N6,N6,N6-trimethyllysine; alternate). An N6,N6-dimethyllysine; alternate modification is found at Lys-37. N6-methyllysine; alternate is present on Lys-37.

The protein belongs to the histone H3 family. The nucleosome is a histone octamer containing two molecules each of H2A, H2B, H3 and H4 assembled in one H3-H4 heterotetramer and two H2A-H2B heterodimers. The octamer wraps approximately 147 bp of DNA. Acetylation is generally linked to gene activation. Can be acetylated to form H3K9ac, H3K14ac, H3K18ac and H3K23ac. H3K9ac could compete with H3K9me and prevent gene silencing. H3K9ac is restricted to euchromatin. In terms of processing, methylated to form mainly H3K4me, H3K9me, H3K18me, H3K23me, H3K27me and H3K36me. H3K4me1/2/3, H3K9me3, H3K27me3 and H3K36me1/2/3 are typical marks for euchromatin, whereas heterochromatic chromocenters are enriched in H3K9me1/2 and H3K27me1/2. H2BK143ub1 is probably prerequisite for H3K4me. Post-translationally, can be phosphorylated to form H3S10ph, H3T11ph and H3S28ph.

Its subcellular location is the nucleus. The protein localises to the chromosome. In terms of biological role, core component of nucleosome. Nucleosomes wrap and compact DNA into chromatin, limiting DNA accessibility to the cellular machineries which require DNA as a template. Histones thereby play a central role in transcription regulation, DNA repair, DNA replication and chromosomal stability. DNA accessibility is regulated via a complex set of post-translational modifications of histones, also called histone code, and nucleosome remodeling. The sequence is that of Histone H3.2 from Brassica napus (Rape).